We begin with the raw amino-acid sequence, 181 residues long: Adenine phosphoribosyltransferase (181 aa).

Belongs to the purine/pyrimidine phosphoribosyltransferase family. As to quaternary structure, homodimer.

The protein resides in the cytoplasm. It carries out the reaction AMP + diphosphate = 5-phospho-alpha-D-ribose 1-diphosphate + adenine. Its pathway is purine metabolism; AMP biosynthesis via salvage pathway; AMP from adenine: step 1/1. Its function is as follows. Catalyzes a salvage reaction resulting in the formation of AMP, that is energically less costly than de novo synthesis. This Methylobacterium nodulans (strain LMG 21967 / CNCM I-2342 / ORS 2060) protein is Adenine phosphoribosyltransferase.